The following is a 474-amino-acid chain: tRNA-2-methylthio-N(6)-dimethylallyladenosine synthase (474 aa).

An MTTase N-terminal domain is found at 3–120; the sequence is KKLLIKTWGC…LPEMIKQSQS (118 aa). [4Fe-4S] cluster-binding residues include C12, C49, C83, C157, C161, and C164. The Radical SAM core domain maps to 143–375; it reads RAEGATAFVS…QQTVNTQAMR (233 aa). Residues 378–441 enclose the TRAM domain; the sequence is RQMLDTEQRV…ANSLRGELVR (64 aa).

It belongs to the methylthiotransferase family. MiaB subfamily. In terms of assembly, monomer. It depends on [4Fe-4S] cluster as a cofactor.

The protein resides in the cytoplasm. The enzyme catalyses N(6)-dimethylallyladenosine(37) in tRNA + (sulfur carrier)-SH + AH2 + 2 S-adenosyl-L-methionine = 2-methylsulfanyl-N(6)-dimethylallyladenosine(37) in tRNA + (sulfur carrier)-H + 5'-deoxyadenosine + L-methionine + A + S-adenosyl-L-homocysteine + 2 H(+). Its function is as follows. Catalyzes the methylthiolation of N6-(dimethylallyl)adenosine (i(6)A), leading to the formation of 2-methylthio-N6-(dimethylallyl)adenosine (ms(2)i(6)A) at position 37 in tRNAs that read codons beginning with uridine. The sequence is that of tRNA-2-methylthio-N(6)-dimethylallyladenosine synthase from Vibrio campbellii (strain ATCC BAA-1116).